The following is a 606-amino-acid chain: Lysosomal cobalamin transporter ABCD4 (606 aa).

The 294-residue stretch at 39 to 332 folds into the ABC transmembrane type-1 domain; sequence NALMFLTLLC…CFTQLIDLST (294 aa). A run of 5 helical transmembrane segments spans residues 43–63, 76–96, 190–210, 279–299, and 314–334; these read FLTLLCLTLLEQFVIYQVGLI, LEGFKTLTFLAVMLIVLNSTL, IFGYFILGTVVNKTLMGPIVM, YLGSILSYVVIAIPIFSGVYG, and AFVCIYLISCFTQLIDLSTTL. One can recognise an ABC transporter domain in the interval 389–603; the sequence is LERVSISAPS…GGGRWELMRI (215 aa). 421–428 provides a ligand contact to ATP; sequence GNTGTGKT.

The protein belongs to the ABC transporter superfamily. ABCD family. Peroxisomal fatty acyl CoA transporter (TC 3.A.1.203) subfamily. In terms of assembly, homodimer or heterodimer. Interacts with LMBRD1; this interaction induces the translocation of ABCD4 from the ER to the lysosome membrane. Interacts with LMBRD1 and MMACHC; this interaction ensures the transport of cobalamin from the lysosome to the cytosol. Ubiquitous.

It is found in the endoplasmic reticulum membrane. The protein localises to the lysosome membrane. The enzyme catalyses an R-cob(III)alamin(out) + ATP + H2O = an R-cob(III)alamin(in) + ADP + phosphate + H(+). In terms of biological role, lysosomal membrane protein that transports cobalamin (Vitamin B12) from the lysosomal lumen to the cytosol in an ATP-dependent manner. Targeted by LMBRD1 lysosomal chaperone from the endoplasmic reticulum to the lysosomal membrane. Then forms a complex with lysosomal chaperone LMBRD1 and cytosolic MMACHC to transport cobalamin across the lysosomal membrane. In Homo sapiens (Human), this protein is Lysosomal cobalamin transporter ABCD4.